Reading from the N-terminus, the 318-residue chain is MKARGFKTKMRGFKIFSGSAHPAFGKEVSKHLGFPLSKAVIGKFSDGEINIQISESVRGKDIFIIQPTCVPVNDNLMELLVMVDALRRSSANSITAVLPYFGYARQDRKAAPRVPITAKMVANLMQEVGIERIITMDLHAGQIQGFFDVPVDNLYGSIVFRDYIRSKALKNPIIASPDVGGVTRARYFANQMGLDLIIVDKRREKANESEVMNIIGSAKERDVILVDDMIDTAGTICKAALALKEQGATSVMALGTHAVLSGNAIKRIKESALDEVVVTNSIPLVQKCDKITTLSVASLFAEVIRRIYHNESVQSLFT.

Residues 46 to 48 (DGE) and 105 to 106 (RQ) each bind ATP. Mg(2+)-binding residues include H139 and D178. K201 is a catalytic residue. Residues R203, D227, and 231–235 (DTAGT) each bind D-ribose 5-phosphate.

It belongs to the ribose-phosphate pyrophosphokinase family. Class I subfamily. As to quaternary structure, homohexamer. Mg(2+) serves as cofactor.

It localises to the cytoplasm. The enzyme catalyses D-ribose 5-phosphate + ATP = 5-phospho-alpha-D-ribose 1-diphosphate + AMP + H(+). It participates in metabolic intermediate biosynthesis; 5-phospho-alpha-D-ribose 1-diphosphate biosynthesis; 5-phospho-alpha-D-ribose 1-diphosphate from D-ribose 5-phosphate (route I): step 1/1. In terms of biological role, involved in the biosynthesis of the central metabolite phospho-alpha-D-ribosyl-1-pyrophosphate (PRPP) via the transfer of pyrophosphoryl group from ATP to 1-hydroxyl of ribose-5-phosphate (Rib-5-P). The chain is Ribose-phosphate pyrophosphokinase from Helicobacter pylori (strain J99 / ATCC 700824) (Campylobacter pylori J99).